A 650-amino-acid chain; its full sequence is Probable Xaa-Pro aminopeptidase P (650 aa).

4 residues coordinate Mn(2+): aspartate 447, aspartate 458, glutamate 556, and glutamate 570.

Belongs to the peptidase M24B family. Mn(2+) is required as a cofactor.

The enzyme catalyses Release of any N-terminal amino acid, including proline, that is linked to proline, even from a dipeptide or tripeptide.. Catalyzes the removal of a penultimate prolyl residue from the N-termini of peptides. This chain is Probable Xaa-Pro aminopeptidase P (AMPP), found in Phaeosphaeria nodorum (strain SN15 / ATCC MYA-4574 / FGSC 10173) (Glume blotch fungus).